The sequence spans 140 residues: Nucleoside diphosphate kinase (140 aa).

K11, F59, R87, T93, R104, and N114 together coordinate ATP. The active-site Pros-phosphohistidine intermediate is H117.

This sequence belongs to the NDK family. In terms of assembly, homotetramer. It depends on Mg(2+) as a cofactor.

It is found in the cytoplasm. The catalysed reaction is a 2'-deoxyribonucleoside 5'-diphosphate + ATP = a 2'-deoxyribonucleoside 5'-triphosphate + ADP. The enzyme catalyses a ribonucleoside 5'-diphosphate + ATP = a ribonucleoside 5'-triphosphate + ADP. In terms of biological role, major role in the synthesis of nucleoside triphosphates other than ATP. The ATP gamma phosphate is transferred to the NDP beta phosphate via a ping-pong mechanism, using a phosphorylated active-site intermediate. This is Nucleoside diphosphate kinase from Dinoroseobacter shibae (strain DSM 16493 / NCIMB 14021 / DFL 12).